A 203-amino-acid chain; its full sequence is Proteasome subunit beta 2 (203 aa).

The propeptide at 1–9 is removed in mature form; by autocatalysis; it reads MGEEVQIGA. Threonine 10 functions as the Nucleophile in the catalytic mechanism.

The protein belongs to the peptidase T1B family. The 20S proteasome core is composed of 14 alpha and 14 beta subunits that assemble into four stacked heptameric rings, resulting in a barrel-shaped structure. The two inner rings, each composed of seven catalytic beta subunits, are sandwiched by two outer rings, each composed of seven alpha subunits. The catalytic chamber with the active sites is on the inside of the barrel. Has a gated structure, the ends of the cylinder being occluded by the N-termini of the alpha-subunits. Is capped at one or both ends by the proteasome regulatory ATPase, PAN.

It localises to the cytoplasm. The catalysed reaction is Cleavage of peptide bonds with very broad specificity.. With respect to regulation, the formation of the proteasomal ATPase PAN-20S proteasome complex, via the docking of the C-termini of PAN into the intersubunit pockets in the alpha-rings, triggers opening of the gate for substrate entry. Interconversion between the open-gate and close-gate conformations leads to a dynamic regulation of the 20S proteasome proteolysis activity. In terms of biological role, component of the proteasome core, a large protease complex with broad specificity involved in protein degradation. The chain is Proteasome subunit beta 2 from Pyrobaculum aerophilum (strain ATCC 51768 / DSM 7523 / JCM 9630 / CIP 104966 / NBRC 100827 / IM2).